The chain runs to 433 residues: Tol-Pal system protein TolB (433 aa).

A signal peptide spans 1-26 (MSLMTKLGFRALVASCLIAAGGAAHA).

The protein belongs to the TolB family. The Tol-Pal system is composed of five core proteins: the inner membrane proteins TolA, TolQ and TolR, the periplasmic protein TolB and the outer membrane protein Pal. They form a network linking the inner and outer membranes and the peptidoglycan layer.

It is found in the periplasm. Its function is as follows. Part of the Tol-Pal system, which plays a role in outer membrane invagination during cell division and is important for maintaining outer membrane integrity. The polypeptide is Tol-Pal system protein TolB (Burkholderia pseudomallei (strain 1710b)).